Reading from the N-terminus, the 692-residue chain is Elongation factor G (692 aa).

A tr-type G domain is found at 8–283; the sequence is NRIRNIGIAA…AVIDYLPAPT (276 aa). Residues 17–24, 81–85, and 135–138 contribute to the GTP site; these read AHIDAGKT, DTPGH, and NKMD.

This sequence belongs to the TRAFAC class translation factor GTPase superfamily. Classic translation factor GTPase family. EF-G/EF-2 subfamily.

The protein resides in the cytoplasm. Functionally, catalyzes the GTP-dependent ribosomal translocation step during translation elongation. During this step, the ribosome changes from the pre-translocational (PRE) to the post-translocational (POST) state as the newly formed A-site-bound peptidyl-tRNA and P-site-bound deacylated tRNA move to the P and E sites, respectively. Catalyzes the coordinated movement of the two tRNA molecules, the mRNA and conformational changes in the ribosome. The polypeptide is Elongation factor G (Helicobacter pylori (strain G27)).